Here is a 1319-residue protein sequence, read N- to C-terminus: MGPQLATVSLLLLTFFSNSIQYPHSPAATECPAYFNGNIAGNACSREYSICVNGVRQAATCSDDSVFYEDECVPVDESPECRVDENTEEDDTPYAEFDCTSKQDGIYSIGCSNQFISCVAGGAYMAKCPDSLVFNERTQDCRESCDEVKQDTTTAPQVYEDGEEGYGEASGEIAGDYERQPSNEQPDSIDFDCNGLEDGNYADGCNDVFYSCSNNMVFQRYCPPGTVFNINQQSCDFQCTTDDPTTTVSYSTSTITTPQEDDSEYSSTTSADVISTTTTPSIDAIETTTTGFDAVTTTTTTQTPFVCQEGQVNSFGMCSSRFNRCQNNSVRSKQCPVNTLFESSLVMCVFDLPQCQPITVPAAPAYNSYGPPSDTIVSPFDENVRLKPKFDRRRKYHHGKPSYGPVNGNSYLENPFFIPRHRGGSHRDHRRYGYGPAIDSPFSTAFRGRAALSDQFKDYRRARMGKIQGDARKVDGNKRFLIDDEFEGPNAKFVESNIEQVFPKNRHSKKQLGPHEDPDGYDDEKTFDAKDLFGATRRKRSAYYGTEQSVYGQQSAQISARQAQVNKDCQQYTTPTFLTFGDCFDQFIFCSGNGINRMAACPIGETFDKTLRSCSETCGVSTTIVAVTIGTQTSDDLSAPSEYIENDGVTTQSTWNDQPSTTQAPNSYESYTTQYSSNDVPSTSAAPIGDRCSLDASGLFSLGCSQKYIQCSNGAAIVRRCGESLYFNEATQECTYRDEVPECGSQGSTSSPVITTPGQDQSSNYYGIPSDDVPSTTQTPVGDRCAYVASGLFDLGCSQKYIQCSDSAASVRECEGSLYFDERSQSCRFRDEVFKCQTADVSSSSTVPYLDFTTTPASPSEDEPTTYEPSVAPYIPSVTVNPVDTCTSLSDGTHGTGCSSFYFVCSHGRLISSGNCQLGEGYDPSVQGCRTFSEIPARACDEQEVTTDAGLVQLMPYKTLEEVLTTTEAATTVANDGPTDTYITGSTKYSTTDSGEYTIPYGDETTSTRSYDRADNDSEDEEEDDVEHDQKCTVGSRTPVGFCVRTYLECTDAGNVEKLCRIGKLFDSHSNRCVPRIGCGKEAIRDAIKDMIATTPAPAQPKQFEGRCAHVDGEAVFSIGVCSSKYLRCSYGASKLQQCSEDRVFSNDKLECIVRESVSACTVPKNPSIKKYYTSNDQSAFCDGKEDGLYRNERDCSAILQCFGGELFEHPSCQSSLAFNQLTGKCDYPQKVSGCENHGQTNGECSEHGSFIADANNCEVFYRCVWGRKVVMTCPSGTVFNPLLSVCDWPSAVPSCSGQASDSNSSYGSSTYNDDKSGY.

Positions 1 to 19 are cleaved as a signal peptide; that stretch reads MGPQLATVSLLLLTFFSNS. Chitin-binding type-2 domains lie at 28–83, 96–141, and 190–236; these read ATEC…ECRV, EFDC…TQDC, and DFDC…QSCD. 3 cysteine pairs are disulfide-bonded: Cys-61–Cys-72, Cys-128–Cys-141, and Cys-222–Cys-235. The segment at 250–271 is disordered; sequence YSTSTITTPQEDDSEYSSTTSA. The Chitin-binding type-2 4 domain occupies 304-357; that stretch reads PFVCQEGQVNSFGMCSSRFNRCQNNSVRSKQCPVNTLFESSLVMCVFDLPQCQP. An N-linked (GlcNAc...) asparagine glycan is attached at Asn-327. An intrachain disulfide couples Cys-335 to Cys-348. A disordered region spans residues 504–524; the sequence is KNRHSKKQLGPHEDPDGYDDE. The span at 513 to 524 shows a compositional bias: basic and acidic residues; that stretch reads GPHEDPDGYDDE. Residues 566–614 form the Chitin-binding type-2 5 domain; it reads NKDCQQYTTPTFLTFGDCFDQFIFCSGNGINRMAACPIGETFDKTLRSC. Cys-601 and Cys-614 are disulfide-bonded. Residues 649–682 form a disordered region; the sequence is VTTQSTWNDQPSTTQAPNSYESYTTQYSSNDVPS. 3 consecutive Chitin-binding type-2 domains span residues 689 to 745, 782 to 838, and 883 to 942; these read GDRC…ECGS, GDRC…KCQT, and VDTC…ACDE. Cys-721 and Cys-734 are disulfide-bonded. Residues 742–764 are disordered; it reads ECGSQGSTSSPVITTPGQDQSSN. Residues 745 to 764 are compositionally biased toward polar residues; the sequence is SQGSTSSPVITTPGQDQSSN. Cystine bridges form between Cys-814-Cys-827 and Cys-916-Cys-929. The span at 984-995 shows a compositional bias: polar residues; the sequence is TGSTKYSTTDSG. The tract at residues 984–1031 is disordered; sequence TGSTKYSTTDSGEYTIPYGDETTSTRSYDRADNDSEDEEEDDVEHDQK. Residue Asn-1016 is glycosylated (N-linked (GlcNAc...) asparagine). The segment covering 1017–1027 has biased composition (acidic residues); the sequence is DSEDEEEDDVE. Chitin-binding type-2 domains are found at residues 1029 to 1081, 1105 to 1163, 1179 to 1237, and 1242 to 1298; these read DQKC…GCGK, EGRC…ACTV, SAFC…GCEN, and NGEC…SCSG. 4 disulfides stabilise this stretch: Cys-1060–Cys-1073, Cys-1139–Cys-1152, Cys-1213–Cys-1226, and Cys-1274–Cys-1287. The span at 1297 to 1312 shows a compositional bias: low complexity; that stretch reads SGQASDSNSSYGSSTY. The interval 1297–1319 is disordered; sequence SGQASDSNSSYGSSTYNDDKSGY. A glycan (N-linked (GlcNAc...) asparagine) is linked at Asn-1304.

The protein resides in the secreted. Its subcellular location is the extracellular space. The protein localises to the extracellular matrix. Its function is as follows. In unfertilized oocytes, maintains egg-1 and egg-2 at the plasma membrane together with chitin synthase chs-1 and kinase mbk-2. Essential for the formation of a continuous and cohesive chitin layer following fertilization. The protein is Chitin-binding domain protein cbd-1 of Caenorhabditis elegans.